Reading from the N-terminus, the 154-residue chain is Myoglobin (154 aa).

The region spanning 2 to 148 is the Globin domain; sequence GLSDGEWQLV…FRNDMAAKYK (147 aa). S4 is subject to Phosphoserine. Residue H65 participates in nitrite binding. H65 lines the O2 pocket. T68 bears the Phosphothreonine mark. A heme b-binding site is contributed by H94.

This sequence belongs to the globin family. Monomeric.

It is found in the cytoplasm. It localises to the sarcoplasm. It carries out the reaction Fe(III)-heme b-[protein] + nitric oxide + H2O = Fe(II)-heme b-[protein] + nitrite + 2 H(+). The catalysed reaction is H2O2 + AH2 = A + 2 H2O. Functionally, monomeric heme protein which primary function is to store oxygen and facilitate its diffusion within muscle tissues. Reversibly binds oxygen through a pentacoordinated heme iron and enables its timely and efficient release as needed during periods of heightened demand. Depending on the oxidative conditions of tissues and cells, and in addition to its ability to bind oxygen, it also has a nitrite reductase activity whereby it regulates the production of bioactive nitric oxide. Under stress conditions, like hypoxia and anoxia, it also protects cells against reactive oxygen species thanks to its pseudoperoxidase activity. The chain is Myoglobin (MB) from Lagothrix lagotricha (Brown woolly monkey).